Here is an 87-residue protein sequence, read N- to C-terminus: Large ribosomal subunit protein eL20 (87 aa).

Belongs to the eukaryotic ribosomal protein eL20 family. In terms of assembly, part of the 50S ribosomal subunit. Binds 23S rRNA.

In Staphylothermus marinus (strain ATCC 43588 / DSM 3639 / JCM 9404 / F1), this protein is Large ribosomal subunit protein eL20.